The sequence spans 291 residues: 4-hydroxy-tetrahydrodipicolinate synthase (291 aa).

Threonine 44 lines the pyruvate pocket. Tyrosine 132 serves as the catalytic Proton donor/acceptor. The Schiff-base intermediate with substrate role is filled by lysine 160. Isoleucine 202 lines the pyruvate pocket.

It belongs to the DapA family. Homotetramer; dimer of dimers.

It localises to the cytoplasm. It carries out the reaction L-aspartate 4-semialdehyde + pyruvate = (2S,4S)-4-hydroxy-2,3,4,5-tetrahydrodipicolinate + H2O + H(+). The protein operates within amino-acid biosynthesis; L-lysine biosynthesis via DAP pathway; (S)-tetrahydrodipicolinate from L-aspartate: step 3/4. In terms of biological role, catalyzes the condensation of (S)-aspartate-beta-semialdehyde [(S)-ASA] and pyruvate to 4-hydroxy-tetrahydrodipicolinate (HTPA). The polypeptide is 4-hydroxy-tetrahydrodipicolinate synthase (Parvibaculum lavamentivorans (strain DS-1 / DSM 13023 / NCIMB 13966)).